The sequence spans 123 residues: Small ribosomal subunit protein uS12 (123 aa).

The residue at position 89 (aspartate 89) is a 3-methylthioaspartic acid.

The protein belongs to the universal ribosomal protein uS12 family. As to quaternary structure, part of the 30S ribosomal subunit. Contacts proteins S8 and S17. May interact with IF1 in the 30S initiation complex.

In terms of biological role, with S4 and S5 plays an important role in translational accuracy. Functionally, interacts with and stabilizes bases of the 16S rRNA that are involved in tRNA selection in the A site and with the mRNA backbone. Located at the interface of the 30S and 50S subunits, it traverses the body of the 30S subunit contacting proteins on the other side and probably holding the rRNA structure together. The combined cluster of proteins S8, S12 and S17 appears to hold together the shoulder and platform of the 30S subunit. The sequence is that of Small ribosomal subunit protein uS12 from Bartonella bacilliformis (strain ATCC 35685 / KC583 / Herrer 020/F12,63).